The primary structure comprises 247 residues: Serine protease 1 (247 aa).

Positions 1 to 15 (MNPLLILTFVAAALA) are cleaved as a signal peptide. The propeptide at 16–23 (APFDDDDK) is activation peptide. The region spanning 24–244 (IVGGYNCEEN…YVKWIKNTIA (221 aa)) is the Peptidase S1 domain. 5 disulfides stabilise this stretch: Cys-30–Cys-160, Cys-48–Cys-64, Cys-139–Cys-206, Cys-171–Cys-185, and Cys-196–Cys-220. Catalysis depends on His-63, which acts as the Charge relay system. Ca(2+)-binding residues include Glu-75, Asn-77, Val-80, and Glu-85. Asp-107 functions as the Charge relay system in the catalytic mechanism. Position 154 is a sulfotyrosine (Tyr-154). Ser-200 (charge relay system) is an active-site residue.

The protein belongs to the peptidase S1 family. Interacts with SERPINA1. Ca(2+) is required as a cofactor. Occurs in a single-chain form and a two-chain form, produced by proteolytic cleavage after Arg-122. In terms of processing, sulfation at Tyr-154 increases selectivity towards basic versus apolar residues at the P2' position of inhibitors that bind in a substrate-like fashion. Although the increase in selectivity is relatively small, it may facilitate digestion of a broader range of dietary proteins.

Its subcellular location is the secreted. The protein resides in the extracellular space. It catalyses the reaction Preferential cleavage: Arg-|-Xaa, Lys-|-Xaa.. Its function is as follows. Has activity against the synthetic substrates Boc-Phe-Ser-Arg-Mec, Boc-Leu-Thr-Arg-Mec, Boc-Gln-Ala-Arg-Mec and Boc-Val-Pro-Arg-Mec. The single-chain form is more active than the two-chain form against all of these substrates. This Homo sapiens (Human) protein is Serine protease 1.